Here is a 105-residue protein sequence, read N- to C-terminus: Small ribosomal subunit protein uS17 (105 aa).

The protein belongs to the universal ribosomal protein uS17 family. As to quaternary structure, part of the 30S ribosomal subunit.

In terms of biological role, one of the primary rRNA binding proteins, it binds specifically to the 5'-end of 16S ribosomal RNA. The sequence is that of Small ribosomal subunit protein uS17 from Thermus thermophilus (strain ATCC BAA-163 / DSM 7039 / HB27).